Here is a 198-residue protein sequence, read N- to C-terminus: NADH-quinone oxidoreductase subunit C (198 aa).

The protein belongs to the complex I 30 kDa subunit family. NDH-1 is composed of 14 different subunits. Subunits NuoB, C, D, E, F, and G constitute the peripheral sector of the complex.

The protein localises to the cell inner membrane. The catalysed reaction is a quinone + NADH + 5 H(+)(in) = a quinol + NAD(+) + 4 H(+)(out). Functionally, NDH-1 shuttles electrons from NADH, via FMN and iron-sulfur (Fe-S) centers, to quinones in the respiratory chain. The immediate electron acceptor for the enzyme in this species is believed to be ubiquinone. Couples the redox reaction to proton translocation (for every two electrons transferred, four hydrogen ions are translocated across the cytoplasmic membrane), and thus conserves the redox energy in a proton gradient. This chain is NADH-quinone oxidoreductase subunit C, found in Chromobacterium violaceum (strain ATCC 12472 / DSM 30191 / JCM 1249 / CCUG 213 / NBRC 12614 / NCIMB 9131 / NCTC 9757 / MK).